We begin with the raw amino-acid sequence, 806 residues long: Zygotic DNA replication licensing factor mcm3 (806 aa).

The 208-residue stretch at 295 to 502 (VFEQLSRSLA…HDREISDHVL (208 aa)) folds into the MCM domain. 345–352 (GDPSVAKS) lines the ATP pocket. The Arginine finger signature appears at 477–480 (SRFD). Residues 662–738 (KKRRRREGES…TDSSAKPGLS (77 aa)) are disordered. Residues 693–702 (AQDGESHDPY) are compositionally biased toward basic and acidic residues.

Belongs to the MCM family. As to quaternary structure, component of the mcm2-7 complex (RLF-M). The complex forms a toroidal hexameric ring with the proposed subunit order mcm2-mcm6-mcm4-mcm7-mcm3-mcm5. Begins to associate with zmcm6 into mcm complexes at the neurula stage. Component of the CMG helicase complex, composed of the mcm2-7 complex, the GINS complex and cdc45.

It is found in the nucleus. The protein resides in the chromosome. It carries out the reaction ATP + H2O = ADP + phosphate + H(+). Functionally, acts as a component of the mcm2-7 complex (mcm complex) which is the putative replicative helicase essential for 'once per cell cycle' DNA replication initiation and elongation in eukaryotic cells. The active ATPase sites in the mcm2-7 ring are formed through the interaction surfaces of two neighboring subunits such that a critical structure of a conserved arginine finger motif is provided in trans relative to the ATP-binding site of the Walker A box of the adjacent subunit. The six ATPase active sites, however, are likely to contribute differentially to the complex helicase activity. The existence of maternal and zygotic forms of mcm3 and mcm6 suggests that specific forms of mcm2-7 complexes may be used during different stages of development. The chain is Zygotic DNA replication licensing factor mcm3 from Xenopus laevis (African clawed frog).